We begin with the raw amino-acid sequence, 417 residues long: Protein-lysine 6-oxidase (417 aa).

The signal sequence occupies residues 1–21 (MRFAWTVLLLGPLQLCALVHC). The propeptide at 22-168 (APPAAGQQQP…PPSRVDGMVG (147 aa)) is removed by BMP1. A disordered region spans residues 64–89 (YQPQRRRDPGAAVPGAANASAQQPRT). Positions 73–84 (GAAVPGAANASA) are enriched in low complexity. Asn-81, Asn-97, and Asn-144 each carry an N-linked (GlcNAc...) asparagine glycan. Residues 137 to 174 (AGASRAENQTAPGEVPALSNLRPPSRVDGMVGDDPYNP) are disordered. Tyr-187 is modified (sulfotyrosine). Residues 213–417 (PDLVADPYYI…YASGCTISPY (205 aa)) form a lysyl-oxidase like region. Intrachain disulfides connect Cys-238–Cys-244, Cys-291–Cys-340, Cys-324–Cys-330, Cys-351–Cys-361, and Cys-398–Cys-412. Positions 292, 294, and 296 each coordinate Cu cation. Residues 320–355 (KASFCLEDTSCDYGYHRRFACTAHTQGLSPGCYDTY) constitute a cross-link (lysine tyrosylquinone (Lys-Tyr)). Position 355 is a 2',4',5'-topaquinone (Tyr-355).

The protein belongs to the lysyl oxidase family. As to quaternary structure, interacts with MFAP4. Interacts (via propeptide) with EFEMP2; this interaction is strong and facilitates formation of ternary complexes with ELN during elastic fiber assembly; this interaction limits interaction of EFEMP2 with FBLN5. Requires Cu cation as cofactor. Lysine tyrosylquinone residue is required as a cofactor. In terms of processing, the lysine tyrosylquinone cross-link (LTQ) is generated by condensation of the epsilon-amino group of a lysine with a topaquinone produced by oxidation of tyrosine. Post-translationally, proteolytically cleaved by BMP1 which removes the propeptide. Also proteolytically cleaved by ADAMTS2 and ADAMTS14, but not by ADAMTS3, at an additional cleavage site downstream of the BMP1 cleavage site. The propeptide plays a role in directing the deposition of this enzyme to elastic fibers, via interaction with tropoelastin. Cleavage by BMP1 to remove the propeptide does not increase enzymatic activity but increases binding to collagen. Cleavage by ADAMTS2 produces a form with reduced collagen-binding activity. Sulfated at Tyr-187 and also at either Tyr-183 or Tyr-184 which enhances binding to collagen. As to expression, heart, placenta, skeletal muscle, kidney, lung and pancreas.

It localises to the secreted. It is found in the extracellular space. The catalysed reaction is L-lysyl-[protein] + O2 + H2O = (S)-2-amino-6-oxohexanoyl-[protein] + H2O2 + NH4(+). Its function is as follows. Responsible for the post-translational oxidative deamination of peptidyl lysine residues in precursors to fibrous collagen and elastin. Regulator of Ras expression. May play a role in tumor suppression. Plays a role in the aortic wall architecture. The sequence is that of Protein-lysine 6-oxidase (LOX) from Homo sapiens (Human).